The following is a 481-amino-acid chain: Tripartite motif-containing protein 10 (481 aa).

The RING-type zinc-finger motif lies at 16–61; the sequence is CPICQGTLREPVTIDCGHNFCRACLTRYCEIPGPDLEESPTCPLCK. The B box-type zinc-finger motif lies at 94-135; the sequence is GEEDVCQEHGEKIYFFCEDDEMQLCVVCREAGEHATHTMRFL. Cysteine 99, histidine 102, cysteine 121, and histidine 127 together coordinate Zn(2+). Residues 142-177 are a coiled coil; sequence YREQIHKCLKRLRKEREETQEIQSRENKRMQVLLTQ. The 190-residue stretch at 292–481 folds into the B30.2/SPRY domain; sequence REMKMFLEKL…GRGSSFFLSS (190 aa).

The protein belongs to the TRIM/RBCC family. In terms of assembly, interacts with IFNAR1; this interaction prevents association of IFNAR1 with TYK2.

The protein localises to the cytoplasm. Its function is as follows. E3 ligase that plays an essential role in the differentiation and survival of terminal erythroid cells. May directly bind to PTEN and promote its ubiquitination, resulting in its proteasomal degradation and activation of hypertrophic signaling. In addition, plays a role in immune response regulation by repressing the phosphorylation of STAT1 and STAT2 in the interferon/JAK/STAT signaling pathway independent of its E3 ligase activity. Mechanistically, interacts with the intracellular domain of IFNAR1 and thereby inhibits the association of TYK2 and IFNAR1. In Pan troglodytes (Chimpanzee), this protein is Tripartite motif-containing protein 10 (TRIM10).